The sequence spans 127 residues: Large ribosomal subunit protein bL17 (127 aa).

It belongs to the bacterial ribosomal protein bL17 family. In terms of assembly, part of the 50S ribosomal subunit. Contacts protein L32.

This chain is Large ribosomal subunit protein bL17, found in Limosilactobacillus reuteri (strain DSM 20016) (Lactobacillus reuteri).